A 195-amino-acid chain; its full sequence is MQHPHPIDQPTYMPDVPFQPLWGQEAPPPPIVPYQELIAGFPCTDLSLWQRSQVTPLVPQRPSTNGRANGSSSSSKKTRRRVASMAQRRAANIRERRRMFNLNEAFDKLRRKVPTFAYEKRLSRIETLRLAITYIGFMAELLSGTPSNSHKSRSDVYGSMNGHHQAPPPAIHPHHLHPAAAYQRDFASPYNHSLS.

Disordered regions lie at residues 1–24 and 56–82; these read MQHP…LWGQ and PLVP…RRRV. The segment covering 63–75 has biased composition (low complexity); that stretch reads STNGRANGSSSSS. The bHLH domain maps to 86-138; sequence AQRRAANIRERRRMFNLNEAFDKLRRKVPTFAYEKRLSRIETLRLAITYIGFM. Residues 145–175 are disordered; that stretch reads TPSNSHKSRSDVYGSMNGHHQAPPPAIHPHH.

The protein localises to the nucleus. In terms of biological role, transcription factor that binds to the E-box and functions as inhibitor of transcription. DNA binding requires dimerization with an E protein. Inhibits transcription activation by ASCL1/MASH1 by sequestering E proteins. The sequence is that of Protein Fer3 (fer3) from Drosophila melanogaster (Fruit fly).